A 455-amino-acid polypeptide reads, in one-letter code: Glutamate-1-semialdehyde 2,1-aminomutase (455 aa).

N6-(pyridoxal phosphate)lysine is present on lysine 286.

This sequence belongs to the class-III pyridoxal-phosphate-dependent aminotransferase family. HemL subfamily. Homodimer. The cofactor is pyridoxal 5'-phosphate.

Its subcellular location is the cytoplasm. It catalyses the reaction (S)-4-amino-5-oxopentanoate = 5-aminolevulinate. The protein operates within porphyrin-containing compound metabolism; protoporphyrin-IX biosynthesis; 5-aminolevulinate from L-glutamyl-tRNA(Glu): step 2/2. This chain is Glutamate-1-semialdehyde 2,1-aminomutase, found in Clavibacter sepedonicus (Clavibacter michiganensis subsp. sepedonicus).